Reading from the N-terminus, the 513-residue chain is Glutamyl-tRNA(Gln) amidotransferase subunit B, mitochondrial (513 aa).

It belongs to the GatB/GatE family. GatB subfamily. In terms of assembly, subunit of the heterotrimeric GatFAB amidotransferase (AdT) complex, composed of A, B and F subunits.

The protein resides in the mitochondrion. The enzyme catalyses L-glutamyl-tRNA(Gln) + L-glutamine + ATP + H2O = L-glutaminyl-tRNA(Gln) + L-glutamate + ADP + phosphate + H(+). Its function is as follows. Allows the formation of correctly charged Gln-tRNA(Gln) through the transamidation of misacylated Glu-tRNA(Gln) in the mitochondria. The reaction takes place in the presence of glutamine and ATP through an activated gamma-phospho-Glu-tRNA(Gln). The chain is Glutamyl-tRNA(Gln) amidotransferase subunit B, mitochondrial from Debaryomyces hansenii (strain ATCC 36239 / CBS 767 / BCRC 21394 / JCM 1990 / NBRC 0083 / IGC 2968) (Yeast).